We begin with the raw amino-acid sequence, 122 residues long: Large ribosomal subunit protein uL14 (122 aa).

The protein belongs to the universal ribosomal protein uL14 family. In terms of assembly, part of the 50S ribosomal subunit. Forms a cluster with proteins L3 and L19. In the 70S ribosome, L14 and L19 interact and together make contacts with the 16S rRNA in bridges B5 and B8.

Binds to 23S rRNA. Forms part of two intersubunit bridges in the 70S ribosome. This chain is Large ribosomal subunit protein uL14, found in Chloroherpeton thalassium (strain ATCC 35110 / GB-78).